A 359-amino-acid polypeptide reads, in one-letter code: Phospho-N-acetylmuramoyl-pentapeptide-transferase (359 aa).

10 helical membrane-spanning segments follow: residues 3–23, 55–75, 80–100, 117–137, 156–176, 187–207, 231–251, 255–275, 280–300, and 334–354; these read LILI…PALI, VAIL…GMAM, PSAS…VGFI, TAKT…ALQF, IATV…VVSA, LDGL…LITF, LALV…WNAA, IFMG…ISVT, ILAV…VVQI, and FWLL…GEWL.

The protein belongs to the glycosyltransferase 4 family. MraY subfamily. The cofactor is Mg(2+).

It is found in the cell membrane. The enzyme catalyses UDP-N-acetyl-alpha-D-muramoyl-L-alanyl-gamma-D-glutamyl-meso-2,6-diaminopimeloyl-D-alanyl-D-alanine + di-trans,octa-cis-undecaprenyl phosphate = di-trans,octa-cis-undecaprenyl diphospho-N-acetyl-alpha-D-muramoyl-L-alanyl-D-glutamyl-meso-2,6-diaminopimeloyl-D-alanyl-D-alanine + UMP. It functions in the pathway cell wall biogenesis; peptidoglycan biosynthesis. Functionally, catalyzes the initial step of the lipid cycle reactions in the biosynthesis of the cell wall peptidoglycan: transfers peptidoglycan precursor phospho-MurNAc-pentapeptide from UDP-MurNAc-pentapeptide onto the lipid carrier undecaprenyl phosphate, yielding undecaprenyl-pyrophosphoryl-MurNAc-pentapeptide, known as lipid I. The sequence is that of Phospho-N-acetylmuramoyl-pentapeptide-transferase from Mycolicibacterium smegmatis (strain ATCC 700084 / mc(2)155) (Mycobacterium smegmatis).